The chain runs to 76 residues: UPF0729 protein C18orf32 (76 aa).

Residues 1–37 (MVCIPCIVIPVLLWIYKKFLEPYIYPLVSPFVSRIWP) are necessary for its localzation to the endoplasmic reticulum and lipid droplets. Residues 46-76 (DTNKGKVNFKGADMNGLPTKGPTEICDKKKD) are disordered.

It belongs to the UPF0729 family. In terms of assembly, interacts with DERL1 and AMFR. In terms of processing, undergoes ER-associated degradation (ERAD).

The protein resides in the endoplasmic reticulum. It is found in the lipid droplet. May activate the NF-kappa-B signaling pathway. This is UPF0729 protein C18orf32 (C18orf32) from Homo sapiens (Human).